The primary structure comprises 244 residues: tRNA (guanine-N(1)-)-methyltransferase (244 aa).

Residues G112 and 132 to 137 (IGDYIL) each bind S-adenosyl-L-methionine.

It belongs to the RNA methyltransferase TrmD family. In terms of assembly, homodimer.

It localises to the cytoplasm. It carries out the reaction guanosine(37) in tRNA + S-adenosyl-L-methionine = N(1)-methylguanosine(37) in tRNA + S-adenosyl-L-homocysteine + H(+). In terms of biological role, specifically methylates guanosine-37 in various tRNAs. This Geobacillus kaustophilus (strain HTA426) protein is tRNA (guanine-N(1)-)-methyltransferase.